A 350-amino-acid polypeptide reads, in one-letter code: Anthranilate phosphoribosyltransferase (350 aa).

Residues glycine 88, 91-92, threonine 96, 98-101, 116-124, and serine 128 contribute to the 5-phospho-alpha-D-ribose 1-diphosphate site; these read GD, NIST, and KHGGRSVSS. Glycine 88 is a binding site for anthranilate. Position 100 (serine 100) interacts with Mg(2+). Arginine 174 provides a ligand contact to anthranilate. Residues aspartate 233 and glutamate 234 each contribute to the Mg(2+) site.

It belongs to the anthranilate phosphoribosyltransferase family. Homodimer. Mg(2+) is required as a cofactor.

The enzyme catalyses N-(5-phospho-beta-D-ribosyl)anthranilate + diphosphate = 5-phospho-alpha-D-ribose 1-diphosphate + anthranilate. It functions in the pathway amino-acid biosynthesis; L-tryptophan biosynthesis; L-tryptophan from chorismate: step 2/5. Functionally, catalyzes the transfer of the phosphoribosyl group of 5-phosphorylribose-1-pyrophosphate (PRPP) to anthranilate to yield N-(5'-phosphoribosyl)-anthranilate (PRA). This is Anthranilate phosphoribosyltransferase from Albidiferax ferrireducens (strain ATCC BAA-621 / DSM 15236 / T118) (Rhodoferax ferrireducens).